Consider the following 227-residue polypeptide: Cytidylate kinase (227 aa).

12 to 20 (GPSGAGKGT) lines the ATP pocket.

Belongs to the cytidylate kinase family. Type 1 subfamily.

It is found in the cytoplasm. It carries out the reaction CMP + ATP = CDP + ADP. It catalyses the reaction dCMP + ATP = dCDP + ADP. This Marinomonas sp. (strain MWYL1) protein is Cytidylate kinase.